Reading from the N-terminus, the 551-residue chain is MTSSPTAAARTEGEAAPTVPTQVESGTAQRPGLAREMVAILDFGSQYSELIARRIRETKVYSEVLSYQTPIAEIRRLAPKGIILSGGPNSVYEAYAPQCDPALWELGIPILGVCYGMQLMVQQLGGAVERAERAEYGKASLFINDPTDLFTNVEDGTTMWMSHADSVLRMPEGFELLAHTENTPCAAIAHHSRHLYGVQFHPEVVHSRGGMALLRNFVYHICGCEPEWTTAAFIEEAIREVRARVGDKRVLLALSGGVDSSTLAFLLHRAIGDNLTCMFIDQGFMRKNEPERLVKLFKEQFHIPVAYVDAAERFIVRLEGVSDPEQKRKIIGAEFIRVFESESQRLGPFDYLAQGTLYPDIIESAGENIDPKTGERVAVKIKSHHNVGGLPENLRFKLVEPLKRLFKDEVRQVGRALGLPEEIVQRQPFPGPGLAIRVLGELTKDKVDILREADFILRQEVNRSGRYNDYWQSFAVLLPVKTVGVMGDRRTYAYALALRFVTSEDGMTADWARVPYDLLEQIANRIVNEVPGINRVVLDITSKPPGTIEWE.

A disordered region spans residues Met-1–Ala-28. Positions Val-19 to Ala-28 are enriched in polar residues. Residues Met-37–Glu-227 enclose the Glutamine amidotransferase type-1 domain. The active-site Nucleophile is the Cys-114. Residues His-201 and Glu-203 contribute to the active site. The region spanning Trp-228 to Arg-426 is the GMPS ATP-PPase domain. Ser-255–Ser-261 is an ATP binding site.

As to quaternary structure, homodimer.

It catalyses the reaction XMP + L-glutamine + ATP + H2O = GMP + L-glutamate + AMP + diphosphate + 2 H(+). It functions in the pathway purine metabolism; GMP biosynthesis; GMP from XMP (L-Gln route): step 1/1. Its function is as follows. Catalyzes the synthesis of GMP from XMP. This chain is GMP synthase [glutamine-hydrolyzing], found in Gloeobacter violaceus (strain ATCC 29082 / PCC 7421).